We begin with the raw amino-acid sequence, 264 residues long: Phosphoribosylaminoimidazole-succinocarboxamide synthase 1 (264 aa).

This sequence belongs to the SAICAR synthetase family.

It catalyses the reaction 5-amino-1-(5-phospho-D-ribosyl)imidazole-4-carboxylate + L-aspartate + ATP = (2S)-2-[5-amino-1-(5-phospho-beta-D-ribosyl)imidazole-4-carboxamido]succinate + ADP + phosphate + 2 H(+). It functions in the pathway purine metabolism; IMP biosynthesis via de novo pathway; 5-amino-1-(5-phospho-D-ribosyl)imidazole-4-carboxamide from 5-amino-1-(5-phospho-D-ribosyl)imidazole-4-carboxylate: step 1/2. The polypeptide is Phosphoribosylaminoimidazole-succinocarboxamide synthase 1 (purC1) (Mesorhizobium japonicum (strain LMG 29417 / CECT 9101 / MAFF 303099) (Mesorhizobium loti (strain MAFF 303099))).